An 86-amino-acid polypeptide reads, in one-letter code: Cell division topological specificity factor (86 aa).

It belongs to the MinE family.

Functionally, prevents the cell division inhibition by proteins MinC and MinD at internal division sites while permitting inhibition at polar sites. This ensures cell division at the proper site by restricting the formation of a division septum at the midpoint of the long axis of the cell. The sequence is that of Cell division topological specificity factor from Rhizobium etli (strain ATCC 51251 / DSM 11541 / JCM 21823 / NBRC 15573 / CFN 42).